We begin with the raw amino-acid sequence, 138 residues long: Large ribosomal subunit protein bL19 (138 aa).

It belongs to the bacterial ribosomal protein bL19 family.

This protein is located at the 30S-50S ribosomal subunit interface and may play a role in the structure and function of the aminoacyl-tRNA binding site. This chain is Large ribosomal subunit protein bL19, found in Leptospira interrogans serogroup Icterohaemorrhagiae serovar copenhageni (strain Fiocruz L1-130).